Here is a 368-residue protein sequence, read N- to C-terminus: H-2 class I histocompatibility antigen, D-P alpha chain (368 aa).

Positions 1 to 21 are cleaved as a signal peptide; the sequence is MAPRTLLLLLAAALAPTQTRA. The segment at 22–111 is alpha-1; it reads GPHSLRYFVT…LLGYYNQSKG (90 aa). Residues 22-303 are Extracellular-facing; it reads GPHSLRYFVT…RWEPPPSTDS (282 aa). Asn107 carries N-linked (GlcNAc...) asparagine glycosylation. An alpha-2 region spans residues 112–203; it reads GSHTIQGMRG…ELGNATLLCT (92 aa). A disulfide bond links Cys122 and Cys185. 2 N-linked (GlcNAc...) asparagine glycosylation sites follow: Asn197 and Asn277. The interval 204 to 295 is alpha-3; it reads DPPKAHVTHH…GLPEPLTLRW (92 aa). Residues 206–294 enclose the Ig-like C1-type domain; sequence PKAHVTHHPR…EGLPEPLTLR (89 aa). Cys224 and Cys280 are joined by a disulfide. The interval 296 to 303 is connecting peptide; sequence EPPPSTDS. Residues 304–330 traverse the membrane as a helical segment; it reads YMVIVAVLVVLGAVFIIGAVVAFVMMM. Residues 331–368 lie on the Cytoplasmic side of the membrane; the sequence is RRNTGGKGGDYTLAPGSQSSEMSLRDCKVMVHDSHSLA. Ser350 and Ser353 each carry phosphoserine.

Belongs to the MHC class I family. Heterodimer of an alpha chain and a beta chain (beta-2-microglobulin).

Its subcellular location is the membrane. Its function is as follows. Involved in the presentation of foreign antigens to the immune system. The sequence is that of H-2 class I histocompatibility antigen, D-P alpha chain (H2-D1) from Mus musculus (Mouse).